A 291-amino-acid chain; its full sequence is E3 ubiquitin-protein ligase RZFP34 (291 aa).

A CHY-type zinc finger spans residues 20 to 96; it reads IGSGHYGCSH…VQQNCSNCGV (77 aa). The Zn(2+) site is built by Cys27, His29, Cys40, Cys41, Cys47, Cys50, His51, His66, Cys78, Cys81, Cys91, Cys94, Cys103, Cys106, His119, Cys120, Cys123, Cys126, His136, Cys137, Cys140, Cys143, His152, and Cys154. A CTCHY-type zinc finger spans residues 98–162; sequence MGKYFCSKCK…QCVEGAMHHN (65 aa). The RING-type; atypical zinc finger occupies 163 to 206; that stretch reads CPVCFEYLFDSTRDITVLRCGHTMHLECTKDMGLHNRYTCPVCS. Ser173 is subject to Phosphoserine. Thr178 is subject to Phosphothreonine. Ser208 is modified (phosphoserine). Residues 271-291 are disordered; it reads QRGSDSHSCSSGMPQVVGSTG.

As to quaternary structure, interacts with SRK2D/2SNRK2.2, SRK2I/SNRK2.3 and SRK2E/SNRK2.6. Phosphorylated at Ser-173, Thr-178 and Ser-208 by SRK2E/SNRK2.6 in response to abscisic acid (ABA). Phosphorylation activates its E3 ubiquitin-protein ligase activity. In terms of tissue distribution, expressed in roots, leaves, and anthers and stigma of open flowers.

The protein localises to the nucleus. It localises to the cytoplasm. Its subcellular location is the endoplasmic reticulum. It catalyses the reaction S-ubiquitinyl-[E2 ubiquitin-conjugating enzyme]-L-cysteine + [acceptor protein]-L-lysine = [E2 ubiquitin-conjugating enzyme]-L-cysteine + N(6)-ubiquitinyl-[acceptor protein]-L-lysine.. Its pathway is protein modification; protein ubiquitination. Possesses E3 ubiquitin-protein ligase activity in vitro. Mediates mainly 'Lys-48'-linked polyubiquitination. Promotes abscisic acid (ABA)-induced stomatal closure, reactive oxygen species (ROS) production and drought tolerance. Involved in the regulation of stomatal aperture. The sequence is that of E3 ubiquitin-protein ligase RZFP34 from Arabidopsis thaliana (Mouse-ear cress).